Reading from the N-terminus, the 479-residue chain is Glutathione gamma-glutamylcysteinyltransferase 3 (479 aa).

The 221-residue stretch at 1–221 (MASAGLYRRV…GYMIISKLKR (221 aa)) folds into the Peptidase C83 domain. Active-site residues include cysteine 56, histidine 162, and aspartate 180.

The protein belongs to the phytochelatin synthase family. In terms of tissue distribution, expressed in roots, nodules and leaves.

The enzyme catalyses [Glu(-Cys)](n)-Gly + glutathione + H(+) = [Glu(-Cys)](n+1)-Gly + glycine. Its activity is regulated as follows. Requires cadmium for activity. Functionally, involved in the synthesis of phytochelatins (PC) and homophytochelatins (hPC), the heavy-metal-binding peptides of plants. The protein is Glutathione gamma-glutamylcysteinyltransferase 3 (PCS3) of Lotus japonicus (Lotus corniculatus var. japonicus).